The following is a 330-amino-acid chain: Ornithine carbamoyltransferase (330 aa).

Carbamoyl phosphate contacts are provided by residues 57–60 (STRT), glutamine 84, arginine 108, and 135–138 (HPTQ). Residues asparagine 168, aspartate 232, and 236-237 (SM) each bind L-ornithine. Carbamoyl phosphate-binding positions include 273–274 (CL) and arginine 318.

This sequence belongs to the aspartate/ornithine carbamoyltransferase superfamily. OTCase family.

The protein localises to the cytoplasm. It catalyses the reaction carbamoyl phosphate + L-ornithine = L-citrulline + phosphate + H(+). It participates in amino-acid biosynthesis; L-arginine biosynthesis; L-arginine from L-ornithine and carbamoyl phosphate: step 1/3. Its function is as follows. Reversibly catalyzes the transfer of the carbamoyl group from carbamoyl phosphate (CP) to the N(epsilon) atom of ornithine (ORN) to produce L-citrulline. This chain is Ornithine carbamoyltransferase, found in Alkaliphilus metalliredigens (strain QYMF).